We begin with the raw amino-acid sequence, 819 residues long: Endonuclease MutS2 (819 aa).

ATP is bound at residue 339–346 (GPNTGGKT). The Smr domain maps to 744-819 (VDVRGLRVDE…GAGVTVAELA (76 aa)).

This sequence belongs to the DNA mismatch repair MutS family. MutS2 subfamily. As to quaternary structure, homodimer. Binds to stalled ribosomes, contacting rRNA.

Endonuclease that is involved in the suppression of homologous recombination and thus may have a key role in the control of bacterial genetic diversity. In terms of biological role, acts as a ribosome collision sensor, splitting the ribosome into its 2 subunits. Detects stalled/collided 70S ribosomes which it binds and splits by an ATP-hydrolysis driven conformational change. Acts upstream of the ribosome quality control system (RQC), a ribosome-associated complex that mediates the extraction of incompletely synthesized nascent chains from stalled ribosomes and their subsequent degradation. Probably generates substrates for RQC. The protein is Endonuclease MutS2 of Gemmatimonas aurantiaca (strain DSM 14586 / JCM 11422 / NBRC 100505 / T-27).